The following is a 79-amino-acid chain: U-myrmeciitoxin(01)-Mg9a (79 aa).

The signal sequence occupies residues 1 to 21 (MKLSCLLLTLAIIFVLTIVHA). Positions 22 to 48 (PNVEAKALANPESDAIGFADAVGEADP) are excised as a propeptide. Q78 is subject to Glutamine amide.

As to expression, expressed by the venom gland.

It localises to the secreted. In terms of biological role, may have antimicrobial properties, like most ant linear peptides. In Myrmecia gulosa (Red bulldog ant), this protein is U-myrmeciitoxin(01)-Mg9a.